Consider the following 137-residue polypeptide: Small heat shock protein IbpA (137 aa).

Residues 28-137 (SQGNGGYPPY…TLKPRRIEIK (110 aa)) enclose the sHSP domain.

The protein belongs to the small heat shock protein (HSP20) family. In terms of assembly, monomer. Forms homomultimers of about 100-150 subunits at optimal growth temperatures. Conformation changes to monomers at high temperatures or high ionic concentrations.

It is found in the cytoplasm. In terms of biological role, associates with aggregated proteins, together with IbpB, to stabilize and protect them from irreversible denaturation and extensive proteolysis during heat shock and oxidative stress. Aggregated proteins bound to the IbpAB complex are more efficiently refolded and reactivated by the ATP-dependent chaperone systems ClpB and DnaK/DnaJ/GrpE. Its activity is ATP-independent. This is Small heat shock protein IbpA from Serratia proteamaculans (strain 568).